A 269-amino-acid chain; its full sequence is Formamidopyrimidine-DNA glycosylase (269 aa).

Pro2 acts as the Schiff-base intermediate with DNA in catalysis. Glu3 serves as the catalytic Proton donor. Residue Lys57 is the Proton donor; for beta-elimination activity of the active site. Residues His90, Arg109, and Arg150 each coordinate DNA. Residues 235–269 form an FPG-type zinc finger; sequence QVYGRKGEPCRVCGTPVVATKHAQRATFYCRHCQK. The active-site Proton donor; for delta-elimination activity is Arg259.

It belongs to the FPG family. As to quaternary structure, monomer. Requires Zn(2+) as cofactor.

The catalysed reaction is Hydrolysis of DNA containing ring-opened 7-methylguanine residues, releasing 2,6-diamino-4-hydroxy-5-(N-methyl)formamidopyrimidine.. It carries out the reaction 2'-deoxyribonucleotide-(2'-deoxyribose 5'-phosphate)-2'-deoxyribonucleotide-DNA = a 3'-end 2'-deoxyribonucleotide-(2,3-dehydro-2,3-deoxyribose 5'-phosphate)-DNA + a 5'-end 5'-phospho-2'-deoxyribonucleoside-DNA + H(+). Involved in base excision repair of DNA damaged by oxidation or by mutagenic agents. Acts as a DNA glycosylase that recognizes and removes damaged bases. Has a preference for oxidized purines, such as 7,8-dihydro-8-oxoguanine (8-oxoG). Has AP (apurinic/apyrimidinic) lyase activity and introduces nicks in the DNA strand. Cleaves the DNA backbone by beta-delta elimination to generate a single-strand break at the site of the removed base with both 3'- and 5'-phosphates. This is Formamidopyrimidine-DNA glycosylase from Salmonella arizonae (strain ATCC BAA-731 / CDC346-86 / RSK2980).